We begin with the raw amino-acid sequence, 487 residues long: L-asparagine permease 2 (487 aa).

12 helical membrane passes run 26-46, 50-70, 98-118, 133-153, 163-183, 214-234, 256-276, 290-310, 341-361, 369-389, 414-434, and 440-460; these read QLQM…GAGG, SAGP…FLIL, VAFV…IVDT, PIPQ…MNLI, FWAS…GTVF, IVLV…VGIA, IACF…YTAY, IGID…ALSS, TGVP…GIIL, AFEI…ATIV, SPFS…LMYF, and PWMI…WYLV.

Belongs to the amino acid-polyamine-organocation (APC) superfamily. Amino acid transporter (AAT) (TC 2.A.3.1) family.

It is found in the cell membrane. Functionally, dual function in both nitrogen assimilation and in protection against acid stress during infection. Involved in asparagine uptake. This is L-asparagine permease 2 (ansP2) from Mycobacterium bovis (strain ATCC BAA-935 / AF2122/97).